Reading from the N-terminus, the 379-residue chain is Homoserine O-succinyltransferase (379 aa).

The 310-residue stretch at 48 to 357 (NAVLICHALS…SAHGHDAFLM (310 aa)) folds into the AB hydrolase-1 domain. The Nucleophile role is filled by S154. R224 contributes to the substrate binding site. Active-site residues include D319 and H352. A substrate-binding site is contributed by D353.

This sequence belongs to the AB hydrolase superfamily. MetX family. Homodimer.

The protein localises to the cytoplasm. The enzyme catalyses L-homoserine + succinyl-CoA = O-succinyl-L-homoserine + CoA. It functions in the pathway amino-acid biosynthesis; L-methionine biosynthesis via de novo pathway; O-succinyl-L-homoserine from L-homoserine: step 1/1. In terms of biological role, transfers a succinyl group from succinyl-CoA to L-homoserine, forming succinyl-L-homoserine. The polypeptide is Homoserine O-succinyltransferase (Neisseria gonorrhoeae (strain ATCC 700825 / FA 1090)).